The chain runs to 488 residues: UDP-N-acetylmuramoyl-L-alanyl-D-glutamate--2,6-diaminopimelate ligase (488 aa).

Residues Leu24, Ser26, and 41–43 (HQV) each bind UDP-N-acetyl-alpha-D-muramoyl-L-alanyl-D-glutamate. 113-119 (GTNGKTT) contacts ATP. UDP-N-acetyl-alpha-D-muramoyl-L-alanyl-D-glutamate-binding positions include Asn154, 155 to 156 (TT), Ser182, Gln188, and Arg190. Lys222 is modified (N6-carboxylysine). Residues Arg386, 410–413 (DNPR), Gly461, and Glu465 each bind meso-2,6-diaminopimelate. The Meso-diaminopimelate recognition motif signature appears at 410-413 (DNPR).

The protein belongs to the MurCDEF family. MurE subfamily. Mg(2+) serves as cofactor. Post-translationally, carboxylation is probably crucial for Mg(2+) binding and, consequently, for the gamma-phosphate positioning of ATP.

It localises to the cytoplasm. It carries out the reaction UDP-N-acetyl-alpha-D-muramoyl-L-alanyl-D-glutamate + meso-2,6-diaminopimelate + ATP = UDP-N-acetyl-alpha-D-muramoyl-L-alanyl-gamma-D-glutamyl-meso-2,6-diaminopimelate + ADP + phosphate + H(+). Its pathway is cell wall biogenesis; peptidoglycan biosynthesis. Functionally, catalyzes the addition of meso-diaminopimelic acid to the nucleotide precursor UDP-N-acetylmuramoyl-L-alanyl-D-glutamate (UMAG) in the biosynthesis of bacterial cell-wall peptidoglycan. In Haemophilus influenzae (strain PittEE), this protein is UDP-N-acetylmuramoyl-L-alanyl-D-glutamate--2,6-diaminopimelate ligase.